Here is a 201-residue protein sequence, read N- to C-terminus: MSRYRGPRFKKIRRLGALPGLTSKRPKAGSDLRNQSRSVKKSQYRIRLEEKQKLRFHYGLTEHQLLKYVRIAGKAKGSTGQVLLQLLEMRLDNILFRLGMALTIPQARQLVNHGHILVNGRIVDIPSYRCKPRDIITVKDEQNSRTLVQNLLDSSAPEELPNHLTLHTFQYEGLVNQIIDRKCVGLKINELLVVEYYSRQT.

The S4 RNA-binding domain maps to 89 to 152 (MRLDNILFRL…NSRTLVQNLL (64 aa)).

Belongs to the universal ribosomal protein uS4 family. Part of the 30S ribosomal subunit. Contacts protein S5. The interaction surface between S4 and S5 is involved in control of translational fidelity.

The protein localises to the plastid. The protein resides in the chloroplast. Its function is as follows. One of the primary rRNA binding proteins, it binds directly to 16S rRNA where it nucleates assembly of the body of the 30S subunit. Functionally, with S5 and S12 plays an important role in translational accuracy. The sequence is that of Small ribosomal subunit protein uS4c (rps4) from Arabidopsis thaliana (Mouse-ear cress).